A 519-amino-acid polypeptide reads, in one-letter code: NADH-quinone oxidoreductase subunit C/D (519 aa).

The tract at residues 1 to 138 (MSERIEIPAE…TNEEPVDTTQ (138 aa)) is NADH dehydrogenase I subunit C. The segment at 159–519 (DEYIINIGPQ…VDYVVPDIDR (361 aa)) is NADH dehydrogenase I subunit D.

This sequence in the N-terminal section; belongs to the complex I 30 kDa subunit family. In the C-terminal section; belongs to the complex I 49 kDa subunit family. In terms of assembly, NDH-1 is composed of 13 different subunits. Subunits NuoB, CD, E, F, and G constitute the peripheral sector of the complex.

The protein resides in the cell inner membrane. The enzyme catalyses a quinone + NADH + 5 H(+)(in) = a quinol + NAD(+) + 4 H(+)(out). Functionally, NDH-1 shuttles electrons from NADH, via FMN and iron-sulfur (Fe-S) centers, to quinones in the respiratory chain. The immediate electron acceptor for the enzyme in this species is believed to be a menaquinone. Couples the redox reaction to proton translocation (for every two electrons transferred, four hydrogen ions are translocated across the cytoplasmic membrane), and thus conserves the redox energy in a proton gradient. This Phocaeicola vulgatus (strain ATCC 8482 / DSM 1447 / JCM 5826 / CCUG 4940 / NBRC 14291 / NCTC 11154) (Bacteroides vulgatus) protein is NADH-quinone oxidoreductase subunit C/D.